The chain runs to 561 residues: Rho guanine nucleotide exchange factor 9 (561 aa).

Positions 53 to 112 constitute an SH3 domain; sequence DSIVSAEAVWDHVTMANRELAFKAGDVIKVLDASNKDWWWGQIDDEEGWFPASFVRLWVN. The interaction with GPHN stretch occupies residues 145 to 155; the sequence is RDQMRANVINE. The 185-residue stretch at 148–332 folds into the DH domain; sequence MRANVINEIM…RNVTQQINER (185 aa). The PH domain maps to 363–470; the sequence is ELIYTGEMAW…WLRAFREERK (108 aa). Positions 499-524 are disordered; sequence KQKGVNSARSVPPSYPPPQDPLNQGQ. At Ser547 the chain carries Phosphoserine.

As to quaternary structure, interacts with GPHN.

The protein resides in the cytoplasm. Its subcellular location is the postsynaptic density. Functionally, acts as a guanine nucleotide exchange factor (GEF) for CDC42. Promotes formation of GPHN clusters. The sequence is that of Rho guanine nucleotide exchange factor 9 (ARHGEF9) from Bos taurus (Bovine).